The following is a 237-amino-acid chain: Histone H1E (237 aa).

Positions 1–21 are enriched in low complexity; sequence MSDPAQEVEAPVEAAPVASSP. Disordered stretches follow at residues 1–56 and 109–237; these read MSDP…PVSE and LQAK…KKAK. Residues 26–42 are compositionally biased toward basic and acidic residues; it reads EKAPKAPKAEKPKSDKP. The region spanning 50–124 is the H15 domain; that stretch reads THPPVSEMVV…GASGSFKLPP (75 aa). Over residues 182–195 the composition is skewed to low complexity; it reads AKPAAKKAAAPKPK. Residues 200–209 show a composition bias toward basic and acidic residues; that stretch reads PKKEVKPKKE. The span at 210 to 237 shows a compositional bias: basic residues; it reads AKPKKAAAKPAKKPAAKPAKKPAAKKAK.

The protein belongs to the histone H1/H5 family.

The protein resides in the nucleus. It is found in the chromosome. Its function is as follows. Histones H1 are necessary for the condensation of nucleosome chains into higher-order structures. The chain is Histone H1E from Chironomus tentans (Midge).